We begin with the raw amino-acid sequence, 217 residues long: Protein-L-isoaspartate O-methyltransferase 2 (217 aa).

Residue S64 is part of the active site.

Belongs to the methyltransferase superfamily. L-isoaspartyl/D-aspartyl protein methyltransferase family.

The protein localises to the cytoplasm. The catalysed reaction is [protein]-L-isoaspartate + S-adenosyl-L-methionine = [protein]-L-isoaspartate alpha-methyl ester + S-adenosyl-L-homocysteine. Catalyzes the methyl esterification of L-isoaspartyl residues in peptides and proteins that result from spontaneous decomposition of normal L-aspartyl and L-asparaginyl residues. It plays a role in the repair and/or degradation of damaged proteins. The chain is Protein-L-isoaspartate O-methyltransferase 2 from Rhodopseudomonas palustris (strain HaA2).